Here is a 295-residue protein sequence, read N- to C-terminus: Ethanolamine ammonia-lyase small subunit (295 aa).

Residues Val-207, Glu-228, and Cys-258 each coordinate adenosylcob(III)alamin.

It belongs to the EutC family. In terms of assembly, the basic unit is a heterodimer which dimerizes to form tetramers. The heterotetramers trimerize; 6 large subunits form a core ring with 6 small subunits projecting outwards. It depends on adenosylcob(III)alamin as a cofactor.

It is found in the bacterial microcompartment. The enzyme catalyses ethanolamine = acetaldehyde + NH4(+). The protein operates within amine and polyamine degradation; ethanolamine degradation. In terms of biological role, catalyzes the deamination of various vicinal amino-alcohols to oxo compounds. Allows this organism to utilize ethanolamine as the sole source of nitrogen and carbon in the presence of external vitamin B12. This Escherichia coli O7:K1 (strain IAI39 / ExPEC) protein is Ethanolamine ammonia-lyase small subunit.